The chain runs to 102 residues: Citrate lyase acyl carrier protein (102 aa).

Residue Ser14 is modified to O-(phosphoribosyl dephospho-coenzyme A)serine.

This sequence belongs to the CitD family. Oligomer with a subunit composition of (alpha,beta,gamma)6.

It is found in the cytoplasm. In terms of biological role, covalent carrier of the coenzyme of citrate lyase. The sequence is that of Citrate lyase acyl carrier protein from Streptococcus pyogenes serotype M18 (strain MGAS8232).